Reading from the N-terminus, the 663-residue chain is Zeaxanthin epoxidase, chloroplastic (663 aa).

Residues 1–50 (MYSTVFYTSVHPSTSAFSRKQLPLLISKDFPTELYHSLPCSRSLENGQIK) constitute a chloroplast transit peptide. FAD contacts are provided by residues 81–109 (KVLVAGGGIGGLVFALAAKKRGFDVLVFE) and 359–372 (TFSWGKGRVTLLGD). Residues 547–611 (LVLSRDENMP…HGTWITDNEG (65 aa)) form the FHA domain.

Requires FAD as cofactor. Higher expression in leaves than in roots.

Its subcellular location is the plastid. It localises to the chloroplast membrane. The protein localises to the chloroplast thylakoid membrane. The catalysed reaction is all-trans-zeaxanthin + 4 reduced [2Fe-2S]-[ferredoxin] + 2 O2 + 4 H(+) = all-trans-violaxanthin + 4 oxidized [2Fe-2S]-[ferredoxin] + 2 H2O. Its pathway is plant hormone biosynthesis; abscisate biosynthesis. In terms of biological role, converts zeaxanthin into antheraxanthin and subsequently violaxanthin. Involved in the epoxidation of zeaxanthin. Plays an important role in resistance to stresses, seed development and dormancy. The chain is Zeaxanthin epoxidase, chloroplastic (ABA2) from Nicotiana plumbaginifolia (Leadwort-leaved tobacco).